A 47-amino-acid chain; its full sequence is Lysis protein for colicins E2 and E3 (47 aa).

The N-terminal stretch at 1-19 (MKKITGIILLLLAVIILSA) is a signal peptide. Cysteine 20 is lipidated: N-palmitoyl cysteine. The S-diacylglycerol cysteine moiety is linked to residue cysteine 20.

Its subcellular location is the cell outer membrane. Functionally, lysis proteins are required for both colicin release and partial cell lysis. The chain is Lysis protein for colicins E2 and E3 (hic) from Escherichia coli.